The primary structure comprises 425 residues: Glucan endo-1,3-beta-glucosidase 10 (425 aa).

The signal sequence occupies residues 1-26; it reads MASSSLQSLFSLFCLALFSLPLIVSS. Glu-119 functions as the Proton donor in the catalytic mechanism. N-linked (GlcNAc...) asparagine glycosylation is present at Asn-124. The active-site Nucleophile is Glu-266. A disordered region spans residues 347-387; that stretch reads GIKTSSTHSSGSGSSNSTGGSSSGGGGNTGGSSSGGGIYQP. Residues 350–366 show a composition bias toward low complexity; that stretch reads TSSTHSSGSGSSNSTGG. Residue Asn-362 is glycosylated (N-linked (GlcNAc...) asparagine). Over residues 367-384 the composition is skewed to gly residues; that stretch reads SSSGGGGNTGGSSSGGGI. Ser-401 is lipidated: GPI-anchor amidated serine. The propeptide at 402–425 is removed in mature form; sequence AGGKGRFVECVLFFFLLCIIKLRL.

Belongs to the glycosyl hydrolase 17 family. In terms of tissue distribution, highly expressed in flowers and siliques.

The protein localises to the cell membrane. The protein resides in the cell junction. It localises to the plasmodesma. It catalyses the reaction Hydrolysis of (1-&gt;3)-beta-D-glucosidic linkages in (1-&gt;3)-beta-D-glucans.. In terms of biological role, plasmodesmal-associated membrane beta-1,3-glucanase involved in plasmodesmal callose degradation and functions in the gating of plasmodesmata. The polypeptide is Glucan endo-1,3-beta-glucosidase 10 (Arabidopsis thaliana (Mouse-ear cress)).